The sequence spans 943 residues: 2-oxoglutarate dehydrogenase E1 component (943 aa).

It belongs to the alpha-ketoglutarate dehydrogenase family. Homodimer. Part of the 2-oxoglutarate dehydrogenase (OGDH) complex composed of E1 (2-oxoglutarate dehydrogenase), E2 (dihydrolipoamide succinyltransferase) and E3 (dihydrolipoamide dehydrogenase); the complex contains multiple copies of the three enzymatic components (E1, E2 and E3). The cofactor is thiamine diphosphate.

It carries out the reaction N(6)-[(R)-lipoyl]-L-lysyl-[protein] + 2-oxoglutarate + H(+) = N(6)-[(R)-S(8)-succinyldihydrolipoyl]-L-lysyl-[protein] + CO2. Its function is as follows. E1 component of the 2-oxoglutarate dehydrogenase (OGDH) complex which catalyzes the decarboxylation of 2-oxoglutarate, the first step in the conversion of 2-oxoglutarate to succinyl-CoA and CO(2). The polypeptide is 2-oxoglutarate dehydrogenase E1 component (sucA) (Azotobacter vinelandii).